Reading from the N-terminus, the 1123-residue chain is Telomerase reverse transcriptase (1123 aa).

Positions 1-230 are RNA-interacting domain 1; sequence MPRAPRCRAV…ARRRRGSPGS (230 aa). The segment at 58–197 is GQ motif; sequence VPWGARPPPA…APGLPGLPGL (140 aa). The required for regulating specificity for telomeric DNA and for processivity for primer elongation stretch occupies residues 137–141; sequence WGLLL. The disordered stretch occupies residues 202–311; sequence AGAGASADLR…GVPHDPAHPE (110 aa). The short motif at 222-240 is the Bipartite nuclear localization signal element; it reads RRRRGSPGSGVPLAKRPRR. Serine 227 is modified (phosphoserine; by PKB/AKT1). A linker region spans residues 231–308; sequence GVPLAKRPRR…GPQGVPHDPA (78 aa). Over residues 260 to 279 the composition is skewed to low complexity; that stretch reads PPVSEAPAVTPAVAASPAAS. The RNA-interacting domain 2 stretch occupies residues 309 to 539; the sequence is HPETKRFLYC…LARFLVLVDG (231 aa). Positions 312 to 317 match the TFLY; involved in RNA binding motif; the sequence is TKRFLY. The segment at 360 to 510 is QFP motif; sequence ARRMRRLPAR…MKVRDCTWLH (151 aa). The CP motif stretch occupies residues 381–401; that stretch reads LGNHARCPYRALLRTHCPLRA. Position 446 is a phosphoserine; by DYRK2 (serine 446). One can recognise a Reverse transcriptase domain in the interval 595-926; that stretch reads EVRRHREARP…CLFPWCGLLL (332 aa). Tyrosine 697 carries the post-translational modification Phosphotyrosine; by SRC-type Tyr-kinases. Mg(2+) is bound by residues aspartate 702, aspartate 859, and aspartate 860. The segment at 905–919 is required for oligomerization; it reads LGSAAPLQLPAHCLF. Residues 921-925 are primer grip sequence; sequence WCGLL. Residues 927–1123 form a CTE region; that stretch reads DTRTLEVSCD…LTADFKTILD (197 aa).

The protein belongs to the reverse transcriptase family. Telomerase subfamily. As to quaternary structure, catalytic component of the telomerase holoenzyme complex composed of one molecule of TERT, one molecule of WRAP53/TCAB1, two molecules of H/ACA ribonucleoprotein complex subunits DKC1, NOP10, NHP2 and GAR1, and a telomerase RNA template component (TERC). The telomerase holoenzyme complex is associated with TEP1, SMG6/EST1A and POT1. The molecular chaperone HSP90/P23 complex is required for correct assembly and stabilization of the active telomerase. Interacts directly with HSP90A and PTGES3. Interacts with HSPA1A; the interaction occurs in the absence of TERC and dissociates once the complex has formed. Interacts with RAN; the interaction promotes nuclear export of TERT. Interacts with XPO1. Interacts with PTPN11; the interaction retains TERT in the nucleus. Interacts with NCL (via RRM1 and C-terminal RRM4/Arg/Gly-rich domains); the interaction is important for nucleolar localization of TERT. Interacts with SMARCA4 (via the bromodomain); the interaction regulates Wnt-mediated signaling. Interacts with MCRS1 (isoform MCRS2); the interaction inhibits in vitro telomerase activity. Interacts with PIF1; the interaction has no effect on the elongation activity of TERT. Interacts with PML; the interaction recruits TERT to PML bodies and inhibits telomerase activity. Interacts with GNL3L. Interacts with isoform 1 and isoform 2 of NVL. Interacts with DHX36. Interacts with ATF7. Post-translationally, phosphorylation at Tyr-697 under oxidative stress leads to translocation of TERT to the cytoplasm and reduces its antiapoptotic activity. Dephosphorylated by SHP2/PTPN11 leading to nuclear retention. Phosphorylation at Ser-227 by the AKT pathway promotes nuclear location. Phosphorylation at the G2/M phase at Ser-446 by DYRK2 promotes ubiquitination by the EDVP complex and degradation. In terms of processing, ubiquitinated by the EDVP complex, a E3 ligase complex following phosphorylation at Ser-446 by DYRK2. Ubiquitinated leads to proteasomal degradation.

The protein localises to the nucleus. It is found in the nucleolus. The protein resides in the nucleoplasm. Its subcellular location is the chromosome. It localises to the telomere. The protein localises to the cytoplasm. It is found in the PML body. The enzyme catalyses DNA(n) + a 2'-deoxyribonucleoside 5'-triphosphate = DNA(n+1) + diphosphate. Functionally, telomerase is a ribonucleoprotein enzyme essential for the replication of chromosome termini in most eukaryotes. Active in progenitor and cancer cells. Inactive, or very low activity, in normal somatic cells. Catalytic component of the teleromerase holoenzyme complex whose main activity is the elongation of telomeres by acting as a reverse transcriptase that adds simple sequence repeats to chromosome ends by copying a template sequence within the RNA component of the enzyme. Catalyzes the RNA-dependent extension of 3'-chromosomal termini with the 6-nucleotide telomeric repeat unit, 5'-TTAGGG-3'. The catalytic cycle involves primer binding, primer extension and release of product once the template boundary has been reached or nascent product translocation followed by further extension. More active on substrates containing 2 or 3 telomeric repeats. Telomerase activity is regulated by a number of factors including telomerase complex-associated proteins, chaperones and polypeptide modifiers. Modulates Wnt signaling. Plays important roles in aging and antiapoptosis. The protein is Telomerase reverse transcriptase (TERT) of Canis lupus familiaris (Dog).